Here is a 287-residue protein sequence, read N- to C-terminus: UPF0354 protein SSP1020 (287 aa).

This sequence belongs to the UPF0354 family.

This is UPF0354 protein SSP1020 from Staphylococcus saprophyticus subsp. saprophyticus (strain ATCC 15305 / DSM 20229 / NCIMB 8711 / NCTC 7292 / S-41).